The chain runs to 669 residues: Hypoxia-inducible factor 3-alpha (669 aa).

A disordered region spans residues 1–27 (MALGLQRARSTTELRKEKSRDAARSRR). Residues 10–27 (STTELRKEKSRDAARSRR) are compositionally biased toward basic and acidic residues. The region spanning 14 to 67 (LRKEKSRDAARSRRSQETEVLYQLAHTLPFARGVSAHLDKASIMRLTISYLRMH) is the bHLH domain. A nuclear localization signal region spans residues 77–100 (QVGAGGEPLDACYLKALEGFVMVL). PAS domains lie at 82 to 154 (GEPL…LSRR) and 227 to 297 (PHPG…LSKG). The tract at residues 230–274 (GSLEPPLGRGAFLSRHSLDMKFTYCDDRIAEVAGYSPDDLIGCSA) is nuclear export signal. The tract at residues 354–389 (EQTEQHSRRPIQRGAPSQKDTPNPGDSLDTPGPRIL) is disordered. The LRRLL signature appears at 414 to 418 (LRRLL). A compositionally biased stretch (polar residues) spans 430–444 (TPSTPLATRHPQSPL). Residues 430-451 (TPSTPLATRHPQSPLSADLPDE) form a disordered region. An ODD region spans residues 452 to 581 (LPVGTENVHR…TLAQSSEDED (130 aa)). The tract at residues 454–506 (VGTENVHRLFTSGKDTEAVETDLDIAQDADALDLEMLAPYISMDDDFQLNASE) is NTAD. Residue Lys-467 forms a Glycyl lysine isopeptide (Lys-Gly) (interchain with G-Cter in ubiquitin) linkage. Positions 490–497 (LAPYISMD) match the LAPYISMD motif. Position 492 is a 4-hydroxyproline (Pro-492). Disordered stretches follow at residues 523 to 600 (RARS…SPEH) and 619 to 669 (APGS…AQAD). Low complexity-rich tracts occupy residues 530-541 (LSPPALEPSLLP) and 550-564 (SCSS…ASSP). A Glycyl lysine isopeptide (Lys-Gly) (interchain with G-Cter in ubiquitin) cross-link involves residue Lys-570. A compositionally biased stretch (low complexity) spans 629 to 646 (PLLNLNEPLGLGPSLLSP).

As to quaternary structure, isoform 2 interacts (via ODD domain) with VHL (via beta domain). Isoform 4 interacts with HIF1A; the interaction inhibits the binding of HIF1A to hypoxia-responsive element (HRE) and HIF1A/ARNT-dependent transcriptional activation. Isoform 4 interacts with ARNT; the interaction occurs in a HIF1A- and DNA-binding-independent manner and does not induce HIF1A/ARNT-dependent transcriptional activation. Isoform 4 interacts with EPAS1. Interacts with BAD, BCL2L2 and MCL1. In terms of processing, in normoxia, hydroxylated on Pro-492 in the oxygen-dependent degradation domain (ODD) by prolyl hydroxylase(s) (PHD). The hydroxylated proline promotes interaction with VHL, initiating rapid ubiquitination and subsequent proteasomal degradation. Ubiquitinated; ubiquitination occurs in a VHL- and oxygen-dependent pathway and subsequently targeted for proteasomal degradation. As to expression, expressed in vascular cells (at protein level). Expressed in kidney. Expressed in lung epithelial cells. Expressed in endothelial cells (venous and arterial cells from umbilical cord and aortic endothelial cells) and in vascular smooth muscle cells (aorta). Strongly expressed in the heart, placenta, and skeletal muscle, whereas a weak expression profile was found in the lung, liver, and kidney. Expressed weakly in cell renal cell carcinoma (CC-RCC) compared to normal renal cells. Expression is down-regulated in numerous kidney tumor cells compared to non tumor kidney tissues. Isoform 2 is expressed in heart, placenta, lung, liver, skeletal muscle and pancreas and in numerous cancer cell lines. Isoform 3 and isoform 4 are weakly expressed in heart, placenta, lung, liver, skeletal muscle and pancreas. Isoform 4 is expressed in fetal tissues, such as heart, brain, thymus, lung, liver, skeletal kidney and spleen. Isoform 3 is weakly expressed in fetal tissues, such as liver and kidney.

The protein resides in the nucleus. It localises to the cytoplasm. Its subcellular location is the nucleus speckle. It is found in the mitochondrion. Functionally, acts as a transcriptional regulator in adaptive response to low oxygen tension. Acts as a regulator of hypoxia-inducible gene expression. Functions as an inhibitor of angiogenesis in hypoxic cells of the cornea. Plays a role in the development of the cardiorespiratory system. May also be involved in apoptosis. Attenuates the ability of transcription factor HIF1A to bind to hypoxia-responsive elements (HRE) located within the enhancer/promoter of hypoxia-inducible target genes and hence inhibits HRE-driven transcriptional activation. Also inhibits hypoxia-inducible ARNT-mediated gene expression. Its function is as follows. Attenuates the ability of transcription factor HIF1A to bind to hypoxia-responsive elements (HRE) located within the enhancer/promoter of hypoxia-inducible target genes and hence inhibits HRE-driven transcriptional activation. In terms of biological role, attenuates the ability of transcription factor HIF1A and EPAS1/HIF2A to bind to hypoxia-responsive elements (HRE) located within the enhancer/promoter of hypoxia-inducible target genes and hence inhibits HRE-driven transcriptional activation. May act as a tumor suppressor and inhibits malignant cell transformation. The sequence is that of Hypoxia-inducible factor 3-alpha from Homo sapiens (Human).